The following is a 437-amino-acid chain: Protein farnesyltransferase subunit beta (437 aa).

PFTB repeat units follow at residues 123–164, 174–215, 222–263, 270–312, and 332–374; these read ATDV…CIIG, REKL…SLTN, FEGT…VILK, LKSL…PLLH, and QQAL…SIAQ. (2E,6E)-farnesyl diphosphate contacts are provided by residues 248–251 and 291–294; these read HGGY and RCNK. Aspartate 297 and cysteine 299 together coordinate Zn(2+). Position 300 to 303 (300 to 303) interacts with (2E,6E)-farnesyl diphosphate; sequence YSFW. Zn(2+) is bound at residue histidine 362. The residue at position 432 (serine 432) is a Phosphoserine. Threonine 436 bears the Phosphothreonine mark.

This sequence belongs to the protein prenyltransferase subunit beta family. Heterodimer of FNTA and FNTB. Requires Zn(2+) as cofactor.

The catalysed reaction is L-cysteinyl-[protein] + (2E,6E)-farnesyl diphosphate = S-(2E,6E)-farnesyl-L-cysteinyl-[protein] + diphosphate. Its function is as follows. Essential subunit of the farnesyltransferase complex. Catalyzes the transfer of a farnesyl moiety from farnesyl diphosphate to a cysteine at the fourth position from the C-terminus of several proteins having the C-terminal sequence Cys-aliphatic-aliphatic-X. The polypeptide is Protein farnesyltransferase subunit beta (Fntb) (Rattus norvegicus (Rat)).